Consider the following 192-residue polypeptide: Interleukin-18 (192 aa).

Positions 1–35 are excised as a propeptide; sequence MAAEPEDNCISFVEMKFINNTLYFVAENDEDLESD.

The protein belongs to the IL-1 family. Forms a ternary complex with ligand-binding receptor subunit IL18R1 and signaling receptor subunit IL18RAP at the plasma membrane. Mature IL18 first binds to IL18R1 forming a low affinity binary complex, which then interacts with IL18RAP to form a high affinity ternary complex that signals inside the cell. Interacts with cargo receptor TMED10; the interaction mediates the translocation from the cytoplasm into the ERGIC (endoplasmic reticulum-Golgi intermediate compartment) and thereby secretion. The pro-IL-18 precursor is processed by CASP1, CASP4 or CASP5 to yield its mature, active form. The pro-IL-18 precursor features autoinhibitory interactions between the propeptide and the post-cleavage-site region, preventing recognition by the IL18R1 receptor. Processing by CASP1, CASP4 or CASP5 induces conformational changes to generate critical receptor-binding sites. The mature form is then secreted and released in the extracellular milieu by passing through the gasdermin-D (GSDMD) pore. In contrast, cleavage by CASP3 inactivates IL18.

It localises to the cytoplasm. It is found in the cytosol. The protein resides in the secreted. Functionally, pro-inflammatory cytokine primarily involved in epithelial barrier repair, polarized T-helper 1 (Th1) cell and natural killer (NK) cell immune responses. Upon binding to IL18R1 and IL18RAP, forms a signaling ternary complex which activates NF-kappa-B, triggering synthesis of inflammatory mediators. Synergizes with IL12/interleukin-12 to induce IFNG synthesis from T-helper 1 (Th1) cells and natural killer (NK) cells. Involved in transduction of inflammation downstream of pyroptosis: its mature form is specifically released in the extracellular milieu by passing through the gasdermin-D (GSDMD) pore. The chain is Interleukin-18 (IL18) from Sus scrofa (Pig).